Here is a 249-residue protein sequence, read N- to C-terminus: 4-hydroxy-tetrahydrodipicolinate reductase (249 aa).

Residues 77–79 and 101–104 each bind NAD(+); these read ATT and SYNT. Histidine 133 acts as the Proton donor/acceptor in catalysis. A (S)-2,3,4,5-tetrahydrodipicolinate-binding site is contributed by histidine 134. Lysine 137 serves as the catalytic Proton donor. 143-144 serves as a coordination point for (S)-2,3,4,5-tetrahydrodipicolinate; it reads GT.

This sequence belongs to the DapB family.

It localises to the cytoplasm. The catalysed reaction is (S)-2,3,4,5-tetrahydrodipicolinate + NAD(+) + H2O = (2S,4S)-4-hydroxy-2,3,4,5-tetrahydrodipicolinate + NADH + H(+). The enzyme catalyses (S)-2,3,4,5-tetrahydrodipicolinate + NADP(+) + H2O = (2S,4S)-4-hydroxy-2,3,4,5-tetrahydrodipicolinate + NADPH + H(+). It functions in the pathway amino-acid biosynthesis; L-lysine biosynthesis via DAP pathway; (S)-tetrahydrodipicolinate from L-aspartate: step 4/4. Catalyzes the conversion of 4-hydroxy-tetrahydrodipicolinate (HTPA) to tetrahydrodipicolinate. The chain is 4-hydroxy-tetrahydrodipicolinate reductase from Exiguobacterium sp. (strain ATCC BAA-1283 / AT1b).